The sequence spans 274 residues: Thymidylate synthase (274 aa).

Residue R21 coordinates dUMP. Residue H51 participates in (6R)-5,10-methylene-5,6,7,8-tetrahydrofolate binding. 123 to 124 provides a ligand contact to dUMP; that stretch reads RR. The Nucleophile role is filled by C156. DUMP contacts are provided by residues 176 to 179, N187, and 217 to 219; these read RSAD and HIY. Residue D179 participates in (6R)-5,10-methylene-5,6,7,8-tetrahydrofolate binding. S273 provides a ligand contact to (6R)-5,10-methylene-5,6,7,8-tetrahydrofolate.

Belongs to the thymidylate synthase family. Bacterial-type ThyA subfamily. In terms of assembly, homodimer.

The protein localises to the cytoplasm. The enzyme catalyses dUMP + (6R)-5,10-methylene-5,6,7,8-tetrahydrofolate = 7,8-dihydrofolate + dTMP. The protein operates within pyrimidine metabolism; dTTP biosynthesis. Functionally, catalyzes the reductive methylation of 2'-deoxyuridine-5'-monophosphate (dUMP) to 2'-deoxythymidine-5'-monophosphate (dTMP) while utilizing 5,10-methylenetetrahydrofolate (mTHF) as the methyl donor and reductant in the reaction, yielding dihydrofolate (DHF) as a by-product. This enzymatic reaction provides an intracellular de novo source of dTMP, an essential precursor for DNA biosynthesis. The sequence is that of Thymidylate synthase from Francisella tularensis subsp. novicida (strain U112).